Consider the following 112-residue polypeptide: MKSTSLFLCSLLLLLVTGAIGRKTKEKYSQSEEVVSESFASGPSSGSSDDELVRDKPYGPKVSGGSFGEEASEEISSRRSKHISRSSGGSNMEGESSYAKKKRSRFAQDVLN.

The signal sequence occupies residues 1–21; it reads MKSTSLFLCSLLLLLVTGAIG. A disordered region spans residues 26-112; sequence EKYSQSEEVV…RSRFAQDVLN (87 aa). Composition is skewed to low complexity over residues 36-47 and 85-97; these read SESFASGPSSGS and RSSGGSNMEGESS.

The protein belongs to the SVP2/SVP5/SVP6 family. As to expression, testis.

Its subcellular location is the secreted. It is found in the extracellular space. The chain is Seminal vesicle secretory protein 4 (Svs4) from Rattus norvegicus (Rat).